Reading from the N-terminus, the 98-residue chain is uncharacterized protein (98 aa).

This is an uncharacterized protein from Thermotoga maritima (strain ATCC 43589 / DSM 3109 / JCM 10099 / NBRC 100826 / MSB8).